We begin with the raw amino-acid sequence, 268 residues long: Indole-3-glycerol phosphate synthase (268 aa).

The protein belongs to the TrpC family.

The enzyme catalyses 1-(2-carboxyphenylamino)-1-deoxy-D-ribulose 5-phosphate + H(+) = (1S,2R)-1-C-(indol-3-yl)glycerol 3-phosphate + CO2 + H2O. The protein operates within amino-acid biosynthesis; L-tryptophan biosynthesis; L-tryptophan from chorismate: step 4/5. In Magnetococcus marinus (strain ATCC BAA-1437 / JCM 17883 / MC-1), this protein is Indole-3-glycerol phosphate synthase.